The primary structure comprises 119 residues: Large ribosomal subunit protein bL20 (119 aa).

Belongs to the bacterial ribosomal protein bL20 family.

Functionally, binds directly to 23S ribosomal RNA and is necessary for the in vitro assembly process of the 50S ribosomal subunit. It is not involved in the protein synthesizing functions of that subunit. The polypeptide is Large ribosomal subunit protein bL20 (Nitrosomonas europaea (strain ATCC 19718 / CIP 103999 / KCTC 2705 / NBRC 14298)).